The chain runs to 61 residues: Large ribosomal subunit protein uL30 (61 aa).

This sequence belongs to the universal ribosomal protein uL30 family. As to quaternary structure, part of the 50S ribosomal subunit.

The polypeptide is Large ribosomal subunit protein uL30 (Francisella tularensis subsp. tularensis (strain FSC 198)).